The following is a 296-amino-acid chain: MLRSGLASLIVDVNLRRTLRPSPTFSFPAHLSRCIITSRYSSRTSLRFPIQISRHQHRLSYFSSSSSSEQSRPTSSSRNSFSGHGQLDSDDNSSPPPSQSSSKVLTLPTVLTLGRVAAVPLLVATFYVDSWWGTTATTSIFIAAAITDWLDGYLARKMRLGSAFGAFLDPVADKLMVAATLILLCTKPIQVAELGPLPWLLTVPSIAIIGREITMSAVREWAASQNGKLLEAVAVNNLGKWKTATQMTALTILLASRDSNVGWLVASGAGLLYVSAGLSVWSLAVYMRKIWKVLMK.

The transit peptide at Met1 to Arg39 directs the protein to the chloroplast and mitochondrion. Residues Phe62–Ser82 show a composition bias toward low complexity. The interval Phe62 to Lys103 is disordered. The next 5 membrane-spanning stretches (helical) occupy residues Val104–Ala124, Phe126–Ile146, Phe164–Leu184, Ile189–Ile209, and Val261–Trp281.

This sequence belongs to the CDP-alcohol phosphatidyltransferase class-I family. Mn(2+) is required as a cofactor.

It is found in the plastid. The protein resides in the chloroplast membrane. Its subcellular location is the mitochondrion membrane. The enzyme catalyses a CDP-1,2-diacyl-sn-glycerol + sn-glycerol 3-phosphate = a 1,2-diacyl-sn-glycero-3-phospho-(1'-sn-glycero-3'-phosphate) + CMP + H(+). It participates in phospholipid metabolism; phosphatidylglycerol biosynthesis; phosphatidylglycerol from CDP-diacylglycerol: step 1/2. In terms of biological role, catalyzes the committed step to the synthesis of the acidic phospholipids, including phosphatidylglycerol (PG). Transfers specifically a phosphatidyl group from CDP-diacylglycerol to glycerol-3-phosphate to form phosphatidylglycerophosphate. Cannot catalyze the phosphatidyl group transfer to inositol, serine, choline or phosphatidylglycerol. Possesses high activity with CDP-dipalmitoylglycerol and low activity with CDP-dioleoylglycerol. Essential for chloroplast differentiation and PG accumulation in thylakoids, an essential process for the assembly of antenna-reaction center complexes to optimize energy transfer from antenna pigments, and for subsequent photochemical efficiency of photosystem II (PSII). During cold acclimation (at 5 degrees Celsius), necessary for the photosystem I (PSI) photochemistry, including both reaction center and light-harvesting integrity. But dispensable in mitochondrion, being redundant with PGPS2 for the production of PG and its derivative cardiolipin (CL) in mitochondrial membranes. Together with PGPS2, required for the proper embryo development by providing PG accurate levels. This chain is CDP-diacylglycerol--glycerol-3-phosphate 3-phosphatidyltransferase 1, chloroplastic/mitochondrial, found in Arabidopsis thaliana (Mouse-ear cress).